The chain runs to 353 residues: UPF0283 membrane protein YcjF (353 aa).

3 helical membrane-spanning segments follow: residues 70–90, 100–120, and 213–233; these read MVMG…VQWT, VALG…GSVV, and ESTL…FIAW.

Belongs to the UPF0283 family.

The protein resides in the cell inner membrane. This is UPF0283 membrane protein YcjF from Escherichia coli O127:H6 (strain E2348/69 / EPEC).